The sequence spans 297 residues: N-acetylmuramic acid 6-phosphate etherase (297 aa).

The SIS domain occupies 55-218; the sequence is AVAALKSGGR…STGAMVKFGK (164 aa). Residue Glu-83 is the Proton donor of the active site. Residue Glu-114 is part of the active site.

This sequence belongs to the GCKR-like family. MurNAc-6-P etherase subfamily. Homodimer.

It carries out the reaction N-acetyl-D-muramate 6-phosphate + H2O = N-acetyl-D-glucosamine 6-phosphate + (R)-lactate. It functions in the pathway amino-sugar metabolism; 1,6-anhydro-N-acetylmuramate degradation. It participates in amino-sugar metabolism; N-acetylmuramate degradation. The protein operates within cell wall biogenesis; peptidoglycan recycling. Specifically catalyzes the cleavage of the D-lactyl ether substituent of MurNAc 6-phosphate, producing GlcNAc 6-phosphate and D-lactate. Together with AnmK, is also required for the utilization of anhydro-N-acetylmuramic acid (anhMurNAc) either imported from the medium or derived from its own cell wall murein, and thus plays a role in cell wall recycling. This chain is N-acetylmuramic acid 6-phosphate etherase, found in Salmonella dublin (strain CT_02021853).